We begin with the raw amino-acid sequence, 304 residues long: NADH-cytochrome b5 reductase 2 (304 aa).

The helical transmembrane segment at 9–29 threads the bilayer; sequence MLVALAVIGVTVLLFLIKALG. In terms of domain architecture, FAD-binding FR-type spans 43-155; sequence NAKYPLPLIE…RGPNGLLVYK (113 aa). Residues 135–150 and 174–209 each bind FAD; these read DSLKIGETIDFRGPNG and VAKHVGMLAGGTGITPMLQLIRQITQDPNDNTKCSL.

Belongs to the flavoprotein pyridine nucleotide cytochrome reductase family. Requires FAD as cofactor.

The protein resides in the membrane. The enzyme catalyses 2 Fe(III)-[cytochrome b5] + NADH = 2 Fe(II)-[cytochrome b5] + NAD(+) + H(+). NADH-cytochrome b5 reductases are involved in desaturation and elongation of fatty acids, cholesterol biosynthesis and drug metabolism. This Xenopus tropicalis (Western clawed frog) protein is NADH-cytochrome b5 reductase 2 (cyb5r2).